Here is a 468-residue protein sequence, read N- to C-terminus: GDNF family receptor alpha-1 (468 aa).

A signal peptide spans 1–24 (MFLATLYFVLPLLDLLMSAEVSGG). 3 tandem repeats follow at residues 25-113 (DRLD…LQGN), 150-238 (KGNN…YEER), and 239-342 (ERPN…KNAI). An intrachain disulfide couples Cys36 to Cys42. Residue Asn59 is glycosylated (N-linked (GlcNAc...) asparagine). 10 disulfide bridges follow: Cys154/Cys214, Cys161/Cys167, Cys178/Cys192, Cys187/Cys233, Cys216/Cys221, Cys243/Cys313, Cys250/Cys256, Cys267/Cys285, Cys277/Cys337, and Cys315/Cys325. N-linked (GlcNAc...) asparagine glycosylation is found at Asn347 and Asn406. Ser430 is lipidated: GPI-anchor amidated serine. A propeptide spans 431 to 468 (HITTKSMAAPPSCGLSSLPVMVFTALAALLSVSLAETS) (removed in mature form).

The protein belongs to the GDNFR family. In terms of assembly, interacts with GDNF ligand and RET: forms a 2:2:2 ternary complex composed of GDNF ligand, GFRA1 and RET receptor. Interacts with SORL1, either alone or in complex with GDNF. Interaction between SORL1 and GFRA1 leads to GFRA1 internalization, but not degradation. Expressed in the brain, in hippocampal neurons (at protein level). Isoform 1 and isoform 2 are expressed in heart, brain, lung, liver, kidney and testis.

It localises to the cell membrane. The protein localises to the golgi apparatus. The protein resides in the trans-Golgi network. Its subcellular location is the endosome. It is found in the multivesicular body. Functionally, coreceptor for GDNF, a neurotrophic factor that enhances survival and morphological differentiation of dopaminergic neurons and increases their high-affinity dopamine uptake. GDNF-binding leads to autophosphorylation and activation of the RET receptor. The polypeptide is GDNF family receptor alpha-1 (Gfra1) (Mus musculus (Mouse)).